Here is a 66-residue protein sequence, read N- to C-terminus: Large ribosomal subunit protein bL35 (66 aa).

Residues 1-15 are compositionally biased toward basic residues; the sequence is MPKMKTKSSAKKRFK. Residues 1–32 are disordered; the sequence is MPKMKTKSSAKKRFKMTATGKVRAGQAGKRHG.

It belongs to the bacterial ribosomal protein bL35 family.

The sequence is that of Large ribosomal subunit protein bL35 from Dinoroseobacter shibae (strain DSM 16493 / NCIMB 14021 / DFL 12).